Consider the following 256-residue polypeptide: UPF0280 protein MTH_727 (256 aa).

This sequence belongs to the UPF0280 family.

This chain is UPF0280 protein MTH_727, found in Methanothermobacter thermautotrophicus (strain ATCC 29096 / DSM 1053 / JCM 10044 / NBRC 100330 / Delta H) (Methanobacterium thermoautotrophicum).